The following is a 259-amino-acid chain: Type-2Aa cytolytic delta-endotoxin (259 aa).

This sequence belongs to the cyt1/cyt2 endotoxin family. As to quaternary structure, homodimer (protoxin) and monomer (active toxin). In terms of processing, active after proteolytic processing.

Kills the larvae of dipteran insects by making pores in the epithelial cell membrane of the insect midgut. The polypeptide is Type-2Aa cytolytic delta-endotoxin (cyt2Aa1) (Bacillus thuringiensis subsp. kyushuensis).